Reading from the N-terminus, the 97-residue chain is Ferredoxin-3 (97 aa).

4Fe-4S ferredoxin-type domains are found at residues 18-47 and 65-95; these read FAESIDKDKCIGCGRCIKVCGYPVLDLKAL and KVMVVAHPENCIGCQACARICPKNCYTHNPL. [4Fe-4S] cluster is bound by residues cysteine 27, cysteine 30, cysteine 33, cysteine 37, cysteine 75, cysteine 78, cysteine 81, and cysteine 85.

In terms of assembly, homodimer. Requires [4Fe-4S] cluster as cofactor.

Ferredoxins are iron-sulfur proteins that transfer electrons in a wide variety of metabolic reactions. This Nostoc sp. (strain PCC 7120 / SAG 25.82 / UTEX 2576) protein is Ferredoxin-3 (fdxB).